The sequence spans 375 residues: tRNA-specific 2-thiouridylase MnmA (375 aa).

Residues 12 to 19 and Met38 each bind ATP; that span reads GMSGGVDS. The interval 98–100 is interaction with target base in tRNA; that stretch reads NPD. Cys103 serves as the catalytic Nucleophile. A disulfide bond links Cys103 and Cys200. Position 127 (Gly127) interacts with ATP. An interaction with tRNA region spans residues 150 to 152; the sequence is KDQ. The Cysteine persulfide intermediate role is filled by Cys200. Positions 312–313 are interaction with tRNA; that stretch reads RY.

Belongs to the MnmA/TRMU family.

The protein resides in the cytoplasm. It catalyses the reaction S-sulfanyl-L-cysteinyl-[protein] + uridine(34) in tRNA + AH2 + ATP = 2-thiouridine(34) in tRNA + L-cysteinyl-[protein] + A + AMP + diphosphate + H(+). Its function is as follows. Catalyzes the 2-thiolation of uridine at the wobble position (U34) of tRNA, leading to the formation of s(2)U34. The polypeptide is tRNA-specific 2-thiouridylase MnmA (Ligilactobacillus salivarius (strain UCC118) (Lactobacillus salivarius)).